Consider the following 338-residue polypeptide: Methionine import ATP-binding protein MetN 1 (338 aa).

The ABC transporter domain occupies Ile-2–Val-241. Residue Gly-38–Ser-45 participates in ATP binding.

Belongs to the ABC transporter superfamily. Methionine importer (TC 3.A.1.24) family. As to quaternary structure, the complex is composed of two ATP-binding proteins (MetN), two transmembrane proteins (MetI) and a solute-binding protein (MetQ).

The protein resides in the cell membrane. It catalyses the reaction L-methionine(out) + ATP + H2O = L-methionine(in) + ADP + phosphate + H(+). The catalysed reaction is D-methionine(out) + ATP + H2O = D-methionine(in) + ADP + phosphate + H(+). In terms of biological role, part of the ABC transporter complex MetNIQ involved in methionine import. Responsible for energy coupling to the transport system. In Listeria monocytogenes serovar 1/2a (strain ATCC BAA-679 / EGD-e), this protein is Methionine import ATP-binding protein MetN 1.